Consider the following 113-residue polypeptide: Vitelline membrane protein Vm32E (113 aa).

Residues 1–17 form the signal peptide; that stretch reads MKIVAFTLVAFVALAGA. The 38-residue stretch at 33–70 folds into the VM domain; the sequence is GYPAPPCPTNYLFSCQPNLAPVPCAQQAPAYGSAGAYT.

The protein belongs to the vitelline membrane family.

The protein resides in the secreted. Its function is as follows. Major early eggshell protein. In Drosophila erecta (Fruit fly), this protein is Vitelline membrane protein Vm32E.